A 338-amino-acid polypeptide reads, in one-letter code: Holliday junction branch migration complex subunit RuvB (338 aa).

The large ATPase domain (RuvB-L) stretch occupies residues Met-1–Tyr-184. Residues Leu-23, Arg-24, Gly-65, Lys-68, Thr-69, Thr-70, Glu-131–Phe-133, Arg-174, Tyr-184, and Arg-221 contribute to the ATP site. Position 69 (Thr-69) interacts with Mg(2+). A small ATPAse domain (RuvB-S) region spans residues Gln-185 to Gln-255. The interval His-258–Asn-338 is head domain (RuvB-H). DNA is bound by residues Arg-313 and Arg-318.

Belongs to the RuvB family. Homohexamer. Forms an RuvA(8)-RuvB(12)-Holliday junction (HJ) complex. HJ DNA is sandwiched between 2 RuvA tetramers; dsDNA enters through RuvA and exits via RuvB. An RuvB hexamer assembles on each DNA strand where it exits the tetramer. Each RuvB hexamer is contacted by two RuvA subunits (via domain III) on 2 adjacent RuvB subunits; this complex drives branch migration. In the full resolvosome a probable DNA-RuvA(4)-RuvB(12)-RuvC(2) complex forms which resolves the HJ.

Its subcellular location is the cytoplasm. It catalyses the reaction ATP + H2O = ADP + phosphate + H(+). Its function is as follows. The RuvA-RuvB-RuvC complex processes Holliday junction (HJ) DNA during genetic recombination and DNA repair, while the RuvA-RuvB complex plays an important role in the rescue of blocked DNA replication forks via replication fork reversal (RFR). RuvA specifically binds to HJ cruciform DNA, conferring on it an open structure. The RuvB hexamer acts as an ATP-dependent pump, pulling dsDNA into and through the RuvAB complex. RuvB forms 2 homohexamers on either side of HJ DNA bound by 1 or 2 RuvA tetramers; 4 subunits per hexamer contact DNA at a time. Coordinated motions by a converter formed by DNA-disengaged RuvB subunits stimulates ATP hydrolysis and nucleotide exchange. Immobilization of the converter enables RuvB to convert the ATP-contained energy into a lever motion, pulling 2 nucleotides of DNA out of the RuvA tetramer per ATP hydrolyzed, thus driving DNA branch migration. The RuvB motors rotate together with the DNA substrate, which together with the progressing nucleotide cycle form the mechanistic basis for DNA recombination by continuous HJ branch migration. Branch migration allows RuvC to scan DNA until it finds its consensus sequence, where it cleaves and resolves cruciform DNA. This chain is Holliday junction branch migration complex subunit RuvB, found in Enterococcus faecalis (strain ATCC 700802 / V583).